Consider the following 708-residue polypeptide: Solute carrier family 15 member 1 (708 aa).

The helical transmembrane segment at 1–21 threads the bilayer; it reads MGMSKSHSFFGYPLSIFFIVV. Residues 22 to 53 are Extracellular-facing; it reads NEFCERFSYYGMRAILILYFTNFISWDDNLST. An N-linked (GlcNAc...) asparagine glycan is attached at N50. A helical membrane pass occupies residues 54–74; the sequence is AIYHTFVALCYLTPILGALIA. The Cytoplasmic portion of the chain corresponds to 75–82; sequence DSWLGKFK. The chain crosses the membrane as a helical span at residues 83–103; that stretch reads TIVSLSIVYTIGQAVTSVSSI. Topologically, residues 104 to 118 are extracellular; that stretch reads NDLTDHNHDGTPDSL. The chain crosses the membrane as a helical span at residues 119-139; it reads PVHVVLSLIGLALIALGTGGI. Topologically, residues 140 to 161 are cytoplasmic; that stretch reads KPCVSAFGGDQFEEGQEKQRNR. A helical membrane pass occupies residues 162 to 182; it reads FFSIFYLAINAGSLLSTIITP. At 183-198 the chain is on the extracellular side; it reads MLRVQQCGIHSKQACY. Residues 199–219 traverse the membrane as a helical segment; that stretch reads PLAFGVPAALMAVALIVFVLG. The Cytoplasmic segment spans residues 220–276; it reads SGMYKKFKPQGNIMGKVAKCIGFAIKNRFRHRSKAFPKREHWLDWAKEKYDERLISQ. A helical membrane pass occupies residues 277-297; that stretch reads IKMVTRVMFLYIPLPMFWALF. Over 298 to 327 the chain is Extracellular; it reads DQQGSRWTLQATTMSGKIGALEIQPDQMQT. A helical transmembrane segment spans residues 328–348; the sequence is VNAILIVIMVPIFDAVLYPLI. The Cytoplasmic portion of the chain corresponds to 349–361; that stretch reads AKCGFNFTSLKKM. The helical transmembrane segment at 362–382 threads the bilayer; that stretch reads AVGMVLASMAFVVAAIVQVEI. Topologically, residues 383 to 584 are extracellular; sequence DKTLPVFPKG…SANTVNMALQ (202 aa). Positions 383–584 are extracellular domain (ECD); that stretch reads DKTLPVFPKG…SANTVNMALQ (202 aa). Residues N404, N408, N439, N509, N514, and N562 are each glycosylated (N-linked (GlcNAc...) asparagine). The chain crosses the membrane as a helical span at residues 585–605; it reads IPQYFLLTCGEVVFSVTGLEF. Topologically, residues 606–619 are cytoplasmic; sequence SYSQAPSNMKSVLQ. Residues 620-640 traverse the membrane as a helical segment; the sequence is AGWLLTVAVGNIIVLIVAGAG. Topologically, residues 641-645 are extracellular; that stretch reads QFSKQ. A helical membrane pass occupies residues 646–666; sequence WAEYILFAALLLVVCVIFAIM. At 667-708 the chain is on the cytoplasmic side; that stretch reads ARFYTYINPAEIEAQFDEDEKKNRLEKSNPYFMSGANSQKQM.

Belongs to the major facilitator superfamily. Proton-dependent oligopeptide transporter (POT/PTR) (TC 2.A.17) family. As to quaternary structure, interacts (via extracellular domain region) with trypsin. As to expression, expressed in small intestine.

The protein localises to the apical cell membrane. It catalyses the reaction a dipeptide(out) + H(+)(out) = a dipeptide(in) + H(+)(in). It carries out the reaction an L-amino acid tripeptide(out) + H(+)(out) = an L-amino acid tripeptide(in) + H(+)(in). The catalysed reaction is L-alanyl-L-lysine(out) + H(+)(out) = L-alanyl-L-lysine(in) + H(+)(in). The enzyme catalyses L-alanyl-L-proline(out) + H(+)(out) = L-alanyl-L-proline(in) + H(+)(in). It catalyses the reaction L-alanyl-L-valine(out) + H(+)(out) = L-alanyl-L-valine(in) + H(+)(in). It carries out the reaction carnosine(out) + H(+)(out) = carnosine(in) + H(+)(in). The catalysed reaction is glycyl-L-glutamine(out) + H(+)(out) = glycyl-L-glutamine(in) + H(+)(in). The enzyme catalyses glycyl-L-leucine(out) + H(+)(out) = glycyl-L-leucine(in) + H(+)(in). It catalyses the reaction glycyl-L-proline(out) + H(+)(out) = glycyl-L-proline(in) + H(+)(in). It carries out the reaction glycyl-sarcosine(out) + H(+)(out) = glycyl-sarcosine(in) + H(+)(in). The catalysed reaction is L-leucyl-L-leucine(out) + H(+)(out) = L-leucyl-L-leucine(in) + H(+)(in). The enzyme catalyses L-leucyl-L-proline(out) + H(+)(out) = L-leucyl-L-proline(in) + H(+)(in). It catalyses the reaction L-phenylalanyl-L-leucine(out) + H(+)(out) = L-phenylalanyl-L-leucine(in) + H(+)(in). It carries out the reaction L-phenylalanyl-L-phenylalanine(out) + H(+)(out) = L-phenylalanyl-L-phenylalanine(in) + H(+)(in). The catalysed reaction is L-lysyl-glycine(out) + H(+)(out) = L-lysyl-glycine(in) + H(+)(in). The enzyme catalyses L-tyrosylglycine(out) + H(+)(out) = L-tyrosylglycine(in) + H(+)(in). It catalyses the reaction L-alanyl-L-aspartate(out) + 2 H(+)(out) = L-alanyl-L-aspartate(in) + 2 H(+)(in). It carries out the reaction L-aspartyl-glycine(out) + 2 H(+)(out) = L-aspartyl-glycine(in) + 2 H(+)(in). The catalysed reaction is glycyl-L-aspartate(out) + 2 H(+)(out) = glycyl-L-aspartate(in) + 2 H(+)(in). The enzyme catalyses glycyl-L-glutamate(out) + 2 H(+)(out) = glycyl-L-glutamate(in) + 2 H(+)(in). It catalyses the reaction L-alanyl-L-leucyl-L-alanine(out) + H(+)(out) = L-alanyl-L-leucyl-L-alanine(in) + H(+)(in). It carries out the reaction L-alanyl-L-prolylglycine(out) + H(+)(out) = L-alanyl-L-prolylglycine(in) + H(+)(in). The catalysed reaction is glycylglycyl-L-isoleucine(out) + H(+)(out) = glycylglycyl-L-isoleucine(in) + H(+)(in). The enzyme catalyses glycylglycyl-L-proline(out) + H(+)(out) = glycylglycyl-L-proline(in) + H(+)(in). It catalyses the reaction L-methionyl-L-phenylalanyl-L-methionine(out) + H(+)(out) = L-methionyl-L-phenylalanyl-L-methionine(in) + H(+)(in). It carries out the reaction N-acetyl-D-muramoyl-L-alanyl-D-isoglutamine(out) + 2 H(+)(out) = N-acetyl-D-muramoyl-L-alanyl-D-isoglutamine(in) + 2 H(+)(in). The catalysed reaction is N(alpha)-formyl-L-methionyl-L-leucyl-L-phenylalanine(out) + 2 H(+)(out) = N(alpha)-formyl-L-methionyl-L-leucyl-L-phenylalanine(in) + 2 H(+)(in). Its function is as follows. Electrogenic proton-coupled amino-acid transporter that transports oligopeptides of 2 to 4 amino acids with a preference for dipeptides. Transports neutral and monovalently charged peptides with a proton to peptide stoichiometry of 1:1 or 2:1. Primarily responsible for the absorption of dietary di- and tripeptides from the small intestinal lumen. Mediates transepithelial transport of muramyl and N-formylated bacterial dipeptides contributing to recognition of pathogenic bacteria by the mucosal immune system. The polypeptide is Solute carrier family 15 member 1 (Homo sapiens (Human)).